The chain runs to 347 residues: Autoinducer 2 import system permease protein LsrC (347 aa).

The next 9 membrane-spanning stretches (helical) occupy residues 14–34, 39–59, 72–92, 93–113, 115–135, 155–175, 213–233, 249–269, and 284–304; these read LLAI…YLSV, MVFS…MVML, GMCA…PVAC, LATL…VAWL, IPAI…MLLW, VFLG…LMAW, LNGG…GFIP, VLGG…ILGA, and IPAW…LVFD.

It belongs to the binding-protein-dependent transport system permease family. AraH/RbsC subfamily. As to quaternary structure, the complex is composed of two ATP-binding proteins (LsrA), two transmembrane proteins (LsrC and LsrD) and a solute-binding protein (LsrB).

The protein resides in the cell inner membrane. Its function is as follows. Part of the ABC transporter complex LsrABCD involved in autoinducer 2 (AI-2) import. Probably responsible for the translocation of the substrate across the membrane. This chain is Autoinducer 2 import system permease protein LsrC (lsrC), found in Salmonella typhi.